A 692-amino-acid polypeptide reads, in one-letter code: Elongation factor G 2 (692 aa).

The tr-type G domain occupies 8–283 (EKTRNIGIMA…SVVAYLPSPL (276 aa)). Residues 17–24 (AHIDAGKT), 81–85 (DTPGH), and 135–138 (NKMD) contribute to the GTP site.

The protein belongs to the TRAFAC class translation factor GTPase superfamily. Classic translation factor GTPase family. EF-G/EF-2 subfamily.

The protein localises to the cytoplasm. In terms of biological role, catalyzes the GTP-dependent ribosomal translocation step during translation elongation. During this step, the ribosome changes from the pre-translocational (PRE) to the post-translocational (POST) state as the newly formed A-site-bound peptidyl-tRNA and P-site-bound deacylated tRNA move to the P and E sites, respectively. Catalyzes the coordinated movement of the two tRNA molecules, the mRNA and conformational changes in the ribosome. This chain is Elongation factor G 2, found in Geobacter sulfurreducens (strain ATCC 51573 / DSM 12127 / PCA).